We begin with the raw amino-acid sequence, 91 residues long: Small ribosomal subunit protein bS18 (91 aa).

This sequence belongs to the bacterial ribosomal protein bS18 family. Part of the 30S ribosomal subunit. Forms a tight heterodimer with protein bS6.

Binds as a heterodimer with protein bS6 to the central domain of the 16S rRNA, where it helps stabilize the platform of the 30S subunit. This is Small ribosomal subunit protein bS18 from Syntrophotalea carbinolica (strain DSM 2380 / NBRC 103641 / GraBd1) (Pelobacter carbinolicus).